The primary structure comprises 466 residues: Ribulose bisphosphate carboxylase large chain (466 aa).

Residue Lys-4 is modified to N6,N6,N6-trimethyllysine. 2 residues coordinate substrate: Asn-113 and Thr-163. Catalysis depends on Lys-165, which acts as the Proton acceptor. Lys-167 is a substrate binding site. Mg(2+)-binding residues include Lys-191, Asp-193, and Glu-194. Lys-191 is modified (N6-carboxylysine). His-284 serves as the catalytic Proton acceptor. Substrate contacts are provided by Arg-285, His-317, and Ser-369.

Belongs to the RuBisCO large chain family. Type I subfamily. In terms of assembly, heterohexadecamer of 8 large chains and 8 small chains; disulfide-linked. The disulfide link is formed within the large subunit homodimers. The cofactor is Mg(2+). In terms of processing, the disulfide bond which can form in the large chain dimeric partners within the hexadecamer appears to be associated with oxidative stress and protein turnover.

The protein resides in the plastid. Its subcellular location is the chloroplast. The catalysed reaction is 2 (2R)-3-phosphoglycerate + 2 H(+) = D-ribulose 1,5-bisphosphate + CO2 + H2O. The enzyme catalyses D-ribulose 1,5-bisphosphate + O2 = 2-phosphoglycolate + (2R)-3-phosphoglycerate + 2 H(+). Its function is as follows. RuBisCO catalyzes two reactions: the carboxylation of D-ribulose 1,5-bisphosphate, the primary event in carbon dioxide fixation, as well as the oxidative fragmentation of the pentose substrate in the photorespiration process. Both reactions occur simultaneously and in competition at the same active site. This chain is Ribulose bisphosphate carboxylase large chain, found in Ruttya fruticosa (African azalea).